Reading from the N-terminus, the 230-residue chain is Orotidine 5'-phosphate decarboxylase (230 aa).

Substrate-binding positions include D10, K31, 58–67 (DLKLHDIPNT), T117, R179, Q188, G208, and R209. Catalysis depends on K60, which acts as the Proton donor.

The protein belongs to the OMP decarboxylase family. Type 1 subfamily. As to quaternary structure, homodimer.

It catalyses the reaction orotidine 5'-phosphate + H(+) = UMP + CO2. The protein operates within pyrimidine metabolism; UMP biosynthesis via de novo pathway; UMP from orotate: step 2/2. Catalyzes the decarboxylation of orotidine 5'-monophosphate (OMP) to uridine 5'-monophosphate (UMP). This is Orotidine 5'-phosphate decarboxylase from Staphylococcus epidermidis (strain ATCC 35984 / DSM 28319 / BCRC 17069 / CCUG 31568 / BM 3577 / RP62A).